The chain runs to 427 residues: DNA topoisomerase 6 subunit A (427 aa).

The region spanning 76 to 209 (LSLSSVQTEI…LNVIAAEKGV (134 aa)) is the Topo IIA-type catalytic domain. The O-(5'-phospho-DNA)-tyrosine intermediate role is filled by Tyr170. Residues Glu256 and Asp308 each contribute to the Mg(2+) site.

The protein belongs to the TOP6A family. Homodimer. Heterotetramer of two TOP6A and two TOP6B subunits. Interacts with BIN4 and RHL1. Mg(2+) serves as cofactor. Highly expressed in leaves, stems, flowers and seedlings.

The protein localises to the nucleus. It catalyses the reaction ATP-dependent breakage, passage and rejoining of double-stranded DNA.. In terms of biological role, component of the DNA topoisomerase VI involved in chromatin organization and progression of endoreduplication cycles. Relaxes both positive and negative superturns and exhibits a strong decatenase activity. Involved in cell-elongation processes. The polypeptide is DNA topoisomerase 6 subunit A (Arabidopsis thaliana (Mouse-ear cress)).